The following is a 225-amino-acid chain: Global nitrogen regulator (225 aa).

Residue 9-131 (RPLAAVFRRL…LLMLQGLSSR (123 aa)) participates in a nucleoside 3',5'-cyclic phosphate binding. The region spanning 145 to 218 (RDMGSRLVSF…KKKITVHNPV (74 aa)) is the HTH crp-type domain. Positions 177–196 (SHQAIAEAIGSTRVTVTRLL) form a DNA-binding region, H-T-H motif.

Its function is as follows. Required for full expression of proteins subject to ammonium repression. Transcriptional activator of genes subject to nitrogen control. This chain is Global nitrogen regulator (ntcA), found in Synechocystis sp. (strain ATCC 27184 / PCC 6803 / Kazusa).